Reading from the N-terminus, the 500-residue chain is Lariat debranching enzyme (500 aa).

Residues 1 to 25 form a disordered region; the sequence is MSSKNPVDEQPCCGSHEGSHQDPAP. The a divalent metal cation site is built by Cys48, His50, Asp79, and Asn124. Positions 164 to 194 are lariat recognition loop; it reads SGIFSQGDFQFSHYERPSFSERDVKSAYHVR. Positions 222, 274, and 276 each coordinate a divalent metal cation. A disordered region spans residues 453–500; the sequence is DDANAKPNQDDVDFGDEDFVIDRGHTSDEPEAKKSRLDEDKFEAVPSE. The span at 462-471 shows a compositional bias: acidic residues; it reads DDVDFGDEDF. Over residues 472–500 the composition is skewed to basic and acidic residues; that stretch reads VIDRGHTSDEPEAKKSRLDEDKFEAVPSE.

This sequence belongs to the lariat debranching enzyme family. Requires Fe(2+) as cofactor. The cofactor is Zn(2+). It depends on Mn(2+) as a cofactor.

The protein resides in the nucleus. Its activity is regulated as follows. Active in presence of diverse metals including Fe(2+), Zn(2+), Mn(2+). Binds two metal cations in two adjacent alpha and beta metal-binding pockets. Its function is as follows. Cleaves the 2'-5' phosphodiester linkage at the branch point of lariat intron pre-mRNAs after splicing and converts them into linear molecules that are subsequently degraded. It thereby facilitates ribonucleotide turnover. The chain is Lariat debranching enzyme from Caenorhabditis elegans.